A 442-amino-acid chain; its full sequence is Histidine--tRNA ligase (442 aa).

This sequence belongs to the class-II aminoacyl-tRNA synthetase family. As to quaternary structure, homodimer.

The protein localises to the cytoplasm. The enzyme catalyses tRNA(His) + L-histidine + ATP = L-histidyl-tRNA(His) + AMP + diphosphate + H(+). This Rhodopirellula baltica (strain DSM 10527 / NCIMB 13988 / SH1) protein is Histidine--tRNA ligase.